A 160-amino-acid polypeptide reads, in one-letter code: Large ribosomal subunit protein eL21 (160 aa).

Belongs to the eukaryotic ribosomal protein eL21 family.

This chain is Large ribosomal subunit protein eL21 (rpl21), found in Dictyostelium discoideum (Social amoeba).